A 379-amino-acid polypeptide reads, in one-letter code: Cobalt-precorrin-5B C(1)-methyltransferase (379 aa).

Belongs to the CbiD family.

It catalyses the reaction Co-precorrin-5B + S-adenosyl-L-methionine = Co-precorrin-6A + S-adenosyl-L-homocysteine. Its pathway is cofactor biosynthesis; adenosylcobalamin biosynthesis; cob(II)yrinate a,c-diamide from sirohydrochlorin (anaerobic route): step 6/10. Functionally, catalyzes the methylation of C-1 in cobalt-precorrin-5B to form cobalt-precorrin-6A. This chain is Cobalt-precorrin-5B C(1)-methyltransferase, found in Klebsiella pneumoniae subsp. pneumoniae (strain ATCC 700721 / MGH 78578).